A 265-amino-acid chain; its full sequence is Palmitoyltransferase ZDHHC21 (265 aa).

At methionine 1–cysteine 16 the chain is on the cytoplasmic side. Residues methionine 17–phenylalanine 37 form a helical membrane-spanning segment. Residues proline 38–histidine 44 lie on the Extracellular side of the membrane. The helical transmembrane segment at isoleucine 45–valine 65 threads the bilayer. The Cytoplasmic portion of the chain corresponds to arginine 66 to tryptophan 133. The 51-residue stretch at glutamate 90–phenylalanine 140 folds into the DHHC domain. Cysteine 120 (S-palmitoyl cysteine intermediate) is an active-site residue. Residues leucine 134–phenylalanine 154 form a helical membrane-spanning segment. Residues cysteine 155 to phenylalanine 185 lie on the Extracellular side of the membrane. The chain crosses the membrane as a helical span at residues methionine 186 to isoleucine 206. At threonine 207 to valine 265 the chain is on the cytoplasmic side.

Belongs to the DHHC palmitoyltransferase family. Widely expressed.

It localises to the golgi apparatus membrane. Its subcellular location is the golgi apparatus. It is found in the cis-Golgi network membrane. The protein localises to the cell membrane. The enzyme catalyses L-cysteinyl-[protein] + hexadecanoyl-CoA = S-hexadecanoyl-L-cysteinyl-[protein] + CoA. Palmitoyltransferase that catalyzes the addition of palmitate onto various protein substrates. Palmitoylates sex steroid hormone receptors, including ESR1, PGR and AR, thereby regulating their targeting to the plasma membrane. This affects rapid intracellular signaling by sex hormones via ERK and AKT kinases and the generation of cAMP, but does not affect that mediated by their nuclear receptor. Palmitoylates FYN, regulates its localization in hair follicles and plays a key role in epidermal homeostasis and hair follicle differentiation. Through the palmitoylation of PLCB1 and the regulation of PLCB1 downstream signaling may indirectly regulate the function of the endothelial barrier and the adhesion of leukocytes to the endothelium. Also has a palmitoyltransferase activity toward ADRA1D, positively regulating its activity and expression and may thereby play a role in vascular contraction. May also palmitoylate eNOS and LCK. The chain is Palmitoyltransferase ZDHHC21 from Homo sapiens (Human).